Consider the following 309-residue polypeptide: Putative HTH-type transcriptional regulatory protein AF_1787 (309 aa).

The HTH cro/C1-type domain occupies Ile131–Ile185. Residues Val142–Glu161 constitute a DNA-binding region (H-T-H motif).

The chain is Putative HTH-type transcriptional regulatory protein AF_1787 from Archaeoglobus fulgidus (strain ATCC 49558 / DSM 4304 / JCM 9628 / NBRC 100126 / VC-16).